Here is an 87-residue protein sequence, read N- to C-terminus: Mitotic-spindle organizing protein 1 (87 aa).

It belongs to the MOZART1 family. In terms of assembly, part of the gamma-tubulin complex.

The protein localises to the cytoplasm. It is found in the cytoskeleton. The protein resides in the microtubule organizing center. It localises to the spindle pole body. Required for gamma-tubulin complex recruitment to the microtubule organizing center (MTOC). The protein is Mitotic-spindle organizing protein 1 of Chaetomium globosum (strain ATCC 6205 / CBS 148.51 / DSM 1962 / NBRC 6347 / NRRL 1970) (Soil fungus).